We begin with the raw amino-acid sequence, 143 residues long: Cold shock domain-containing protein CG9705 (143 aa).

The disordered stretch occupies residues 1 to 30; the sequence is MTEPRTPEKLLAAKPPVLHHNSHSPNASLQ. Residues S22, S24, S28, and S33 each carry the phosphoserine modification. The region spanning 54–121 is the CSD domain; the sequence is VVTGMVKSFS…KHQAVHVQIS (68 aa). Residues S139 and S140 each carry the phosphoserine modification.

This chain is Cold shock domain-containing protein CG9705, found in Drosophila melanogaster (Fruit fly).